The chain runs to 187 residues: Protein SCM4 (187 aa).

3 consecutive transmembrane segments (helical) span residues 11-31 (IAVSSLGLYAGILTSSTVISI), 45-65 (VLCTLGCWSTVLGGLATGAFG), and 80-100 (LLCGLGVAPLSAAYLYLVSLF). The segment covering 114–134 (DLEKQKDEKLPQHHPEVKDGE) has biased composition (basic and acidic residues). The segment at 114 to 135 (DLEKQKDEKLPQHHPEVKDGEA) is disordered. A helical membrane pass occupies residues 162-182 (MSLHMSIVTGITIFTFGKCIL).

The protein belongs to the ATG33 family.

It is found in the membrane. This is Protein SCM4 (SCM4) from Saccharomyces cerevisiae (strain ATCC 204508 / S288c) (Baker's yeast).